The sequence spans 378 residues: Zinc finger protein DPF3 (378 aa).

A Glycyl lysine isopeptide (Lys-Gly) (interchain with G-Cter in SUMO2) cross-link involves residue K99. The tract at residues 145–193 is disordered; that stretch reads VLENDENVEEGNEEEDLEEDIPKRKNRTRGRARGSAGGRRRHDAASQED. Residues 148–163 show a composition bias toward acidic residues; the sequence is NDENVEEGNEEEDLEE. The span at 168–186 shows a compositional bias: basic residues; sequence RKNRTRGRARGSAGGRRRH. The segment at 198–221 adopts a C2H2-type zinc-finger fold; that stretch reads YVCDICGKRYKNRPGLSYHYAHTH. Positions 225 to 254 are disordered; the sequence is EEGDEAQDQETRSPPNHRNENHRPQKGPDG. 2 consecutive PHD-type zinc fingers follow at residues 259 to 319 and 316 to 366; these read NNYC…CKSC and CKSC…CWEL. The segment at 317–332 is interaction with HDGFL2; it reads KSCILCGTSENDDQLL. G323 carries the phosphoserine modification.

This sequence belongs to the requiem/DPF family. In terms of assembly, component of the BAF complex, which includes at least actin (ACTB), ARID1A, ARID1B/BAF250, SMARCA2, SMARCA4/BRG1/BAF190A, ACTL6A/BAF53, ACTL6B/BAF53B, SMARCE1/BAF57, SMARCC1/BAF155, SMARCC2/BAF170, SMARCB1/SNF5/INI1, and one or more of SMARCD1/BAF60A, SMARCD2/BAF60B, or SMARCD3/BAF60C. In muscle cells, the BAF complex also contains DPF3. Interacts with acetylated histones H3 and H4. Component of neuron-specific chromatin remodeling complex (nBAF complex) composed of at least, ARID1A/BAF250A or ARID1B/BAF250B, SMARCD1/BAF60A, SMARCD3/BAF60C, SMARCA2/BRM/BAF190B, SMARCA4/BRG1/BAF190A, SMARCB1/BAF47, SMARCC1/BAF155, SMARCE1/BAF57, SMARCC2/BAF170, DPF1/BAF45B, DPF3/BAF45C, ACTL6B/BAF53B and actin. Interacts with HDGFL2, SMARCA4/BRG1/BAF190A, SMARCC1/BAF155 and SMARCD1/BAF60A. Phosphorylation at Ser-323 enhances its interaction with HDGFL2.

Its subcellular location is the nucleus. Belongs to the neuron-specific chromatin remodeling complex (nBAF complex). During neural development a switch from a stem/progenitor to a post-mitotic chromatin remodeling mechanism occurs as neurons exit the cell cycle and become committed to their adult state. The transition from proliferating neural stem/progenitor cells to post-mitotic neurons requires a switch in subunit composition of the npBAF and nBAF complexes. As neural progenitors exit mitosis and differentiate into neurons, npBAF complexes which contain ACTL6A/BAF53A and PHF10/BAF45A, are exchanged for homologous alternative ACTL6B/BAF53B and DPF1/BAF45B or DPF3/BAF45C subunits in neuron-specific complexes (nBAF). The npBAF complex is essential for the self-renewal/proliferative capacity of the multipotent neural stem cells. The nBAF complex along with CREST plays a role regulating the activity of genes essential for dendrite growth. Muscle-specific component of the BAF complex, a multiprotein complex involved in transcriptional activation and repression of select genes by chromatin remodeling (alteration of DNA-nucleosome topology). Specifically binds acetylated lysines on histone 3 and 4 (H3K14ac, H3K9ac, H4K5ac, H4K8ac, H4K12ac, H4K16ac). In the complex, it acts as a tissue-specific anchor between histone acetylations and methylations and chromatin remodeling. It thereby probably plays an essential role in heart and skeletal muscle development. In terms of biological role, acts as a regulator of myogenesis in cooperation with HDGFL2. Mediates the interaction of HDGFL2 with the BAF complex. HDGFL2-DPF3a activate myogenic genes by increasing chromatin accessibility through recruitment of SMARCA4/BRG1/BAF190A (ATPase subunit of the BAF complex) to myogenic gene promoters. In Homo sapiens (Human), this protein is Zinc finger protein DPF3 (DPF3).